We begin with the raw amino-acid sequence, 616 residues long: UvrABC system protein C (616 aa).

Residues 12 to 91 (ESPGVYLWKD…IKEYHPRFNI (80 aa)) form the GIY-YIG domain. Residues 202 to 237 (SDVMHHVRERMLDASERLDFERAAELRDALAHLEKM) enclose the UVR domain.

Belongs to the UvrC family. In terms of assembly, interacts with UvrB in an incision complex.

Its subcellular location is the cytoplasm. Its function is as follows. The UvrABC repair system catalyzes the recognition and processing of DNA lesions. UvrC both incises the 5' and 3' sides of the lesion. The N-terminal half is responsible for the 3' incision and the C-terminal half is responsible for the 5' incision. In Gemmatimonas aurantiaca (strain DSM 14586 / JCM 11422 / NBRC 100505 / T-27), this protein is UvrABC system protein C.